The chain runs to 286 residues: MQIPFTKMHGLGNNYVYIDLFDYAIDEKLYHDLAIQISDVYTGIGSDGMILIHPTTDADVGMRIFNKDGSEGKSCGNGLRCTAKYAYENGIVTNKKFHIQTKANIVEAEVSVDNNKVNQVTIDMGEPILARNEIPMMGNNDVKVVNEPFVVAGETQYITAVSMGNPHGVFFVDDIEKAPLETLGPTIEKDMRFPESINVEFIEVVSPTELNFRVWERGSGITQACGTGACAAVVAATLNEKVTKSHPIVVHLAGGDLNIEWKEDNHVWMTGPAEVIATGLFYYKEE.

Substrate contacts are provided by Asn13 and Asn66. The Proton donor role is filled by Cys75. Substrate is bound by residues 76-77 (GN), Asn165, Asn198, and 216-217 (ER). Cys225 functions as the Proton acceptor in the catalytic mechanism. Substrate is bound at residue 226-227 (GT).

This sequence belongs to the diaminopimelate epimerase family. As to quaternary structure, homodimer.

Its subcellular location is the cytoplasm. The catalysed reaction is (2S,6S)-2,6-diaminopimelate = meso-2,6-diaminopimelate. The protein operates within amino-acid biosynthesis; L-lysine biosynthesis via DAP pathway; DL-2,6-diaminopimelate from LL-2,6-diaminopimelate: step 1/1. Functionally, catalyzes the stereoinversion of LL-2,6-diaminopimelate (L,L-DAP) to meso-diaminopimelate (meso-DAP), a precursor of L-lysine and an essential component of the bacterial peptidoglycan. This Oceanobacillus iheyensis (strain DSM 14371 / CIP 107618 / JCM 11309 / KCTC 3954 / HTE831) protein is Diaminopimelate epimerase.